Here is a 109-residue protein sequence, read N- to C-terminus: Oncomodulin-2 (109 aa).

EF-hand domains follow at residues 39 to 74 (MSAS…FESG) and 78 to 109 (LTES…MVHS). Residues Asp52, Asp54, Ser56, Tyr58, Glu63, Asp91, Asp93, Asp95, Lys97, and Glu102 each coordinate Ca(2+).

The protein belongs to the parvalbumin family.

The polypeptide is Oncomodulin-2 (OCM2) (Homo sapiens (Human)).